The primary structure comprises 329 residues: Protein STRICTOSIDINE SYNTHASE-LIKE 11 (329 aa).

Positions 1-23 (MMRSFVSLISLLLLLSFSSSVLS) are cleaved as a signal peptide. N-linked (GlcNAc...) asparagine glycosylation is found at Asn-37 and Asn-79.

It belongs to the strictosidine synthase family.

Its subcellular location is the vacuole. The enzyme catalyses 3alpha(S)-strictosidine + H2O = secologanin + tryptamine. It participates in alkaloid biosynthesis; 3alpha(S)-strictosidine biosynthesis; 3alpha(S)-strictosidine from secologanin and tryptamine: step 1/1. Functionally, catalyzes the stereospecific condensation of tryptamine with secologanin to form strictosidine, the key intermediate of indole alkaloid biosynthesis. This Arabidopsis thaliana (Mouse-ear cress) protein is Protein STRICTOSIDINE SYNTHASE-LIKE 11.